The primary structure comprises 416 residues: Phosphoglycerate kinase (416 aa).

Positions 23, 24, 25, 26, 39, 62, 63, 65, 66, 121, 122, 169, and 170 each coordinate (2R)-3-phosphoglycerate. Gly213 is an ADP binding site. Gly213 contacts CDP. Positions 214 and 215 each coordinate AMP. Ala214 contributes to the ATP binding site. Ala214 is a Mg(2+) binding site. A CDP-binding site is contributed by Asp218. Asp218 is a binding site for Mg(2+). Lys219 contributes to the AMP binding site. An ATP-binding site is contributed by Lys219. Gly237 is a binding site for ADP. Residue Gly237 participates in CDP binding. Positions 238 and 312 each coordinate AMP. ATP-binding residues include Gly238 and Gly312. Gly337 and Phe342 together coordinate CDP. Phe342 lines the ADP pocket. AMP is bound at residue Glu343. ATP contacts are provided by Glu343, Asp374, and Thr375. Asp374 is a binding site for Mg(2+).

Belongs to the phosphoglycerate kinase family. As to quaternary structure, monomer. Mg(2+) serves as cofactor.

It is found in the cytoplasm. It localises to the mitochondrion. It catalyses the reaction (2R)-3-phosphoglycerate + ATP = (2R)-3-phospho-glyceroyl phosphate + ADP. The protein operates within carbohydrate degradation; glycolysis; pyruvate from D-glyceraldehyde 3-phosphate: step 2/5. Catalyzes one of the two ATP producing reactions in the glycolytic pathway via the reversible conversion of 1,3-diphosphoglycerate to 3-phosphoglycerate. Both L- and D- forms of purine and pyrimidine nucleotides can be used as substrates, but the activity is much lower on pyrimidines. Negatively regulates the biosynthesis of acetyl-CoA from pyruvate in the mitochondrion. The protein is Phosphoglycerate kinase (pgkA) of Agaricus bisporus (White button mushroom).